The following is a 974-amino-acid chain: Bifunctional glutamine synthetase adenylyltransferase/adenylyl-removing enzyme (974 aa).

The interval 1-464 is adenylyl removase; sequence MKNAFLKTHL…HYAALFENEQ (464 aa). The interval 468-974 is adenylyl transferase; sequence LEIGNLVFTG…CSIFKQIMKH (507 aa).

This sequence belongs to the GlnE family. It depends on Mg(2+) as a cofactor.

The catalysed reaction is [glutamine synthetase]-O(4)-(5'-adenylyl)-L-tyrosine + phosphate = [glutamine synthetase]-L-tyrosine + ADP. It catalyses the reaction [glutamine synthetase]-L-tyrosine + ATP = [glutamine synthetase]-O(4)-(5'-adenylyl)-L-tyrosine + diphosphate. Functionally, involved in the regulation of glutamine synthetase GlnA, a key enzyme in the process to assimilate ammonia. When cellular nitrogen levels are high, the C-terminal adenylyl transferase (AT) inactivates GlnA by covalent transfer of an adenylyl group from ATP to specific tyrosine residue of GlnA, thus reducing its activity. Conversely, when nitrogen levels are low, the N-terminal adenylyl removase (AR) activates GlnA by removing the adenylyl group by phosphorolysis, increasing its activity. The regulatory region of GlnE binds the signal transduction protein PII (GlnB) which indicates the nitrogen status of the cell. The polypeptide is Bifunctional glutamine synthetase adenylyltransferase/adenylyl-removing enzyme (Bartonella quintana (strain Toulouse) (Rochalimaea quintana)).